The sequence spans 206 residues: LexA repressor (206 aa).

A DNA-binding region (H-T-H motif) is located at residues 28-48 (VREIGQAVGLASSSTVHGHLS). Catalysis depends on for autocatalytic cleavage activity residues serine 128 and lysine 166.

The protein belongs to the peptidase S24 family. Homodimer.

The enzyme catalyses Hydrolysis of Ala-|-Gly bond in repressor LexA.. Its function is as follows. Represses a number of genes involved in the response to DNA damage (SOS response), including recA and lexA. In the presence of single-stranded DNA, RecA interacts with LexA causing an autocatalytic cleavage which disrupts the DNA-binding part of LexA, leading to derepression of the SOS regulon and eventually DNA repair. This is LexA repressor from Bacillus cytotoxicus (strain DSM 22905 / CIP 110041 / 391-98 / NVH 391-98).